The primary structure comprises 245 residues: Adapter protein MecA (245 aa).

The protein belongs to the MecA family. Homodimer.

In terms of biological role, enables the recognition and targeting of unfolded and aggregated proteins to the ClpC protease or to other proteins involved in proteolysis. This is Adapter protein MecA from Streptococcus pneumoniae (strain ATCC BAA-255 / R6).